A 75-amino-acid polypeptide reads, in one-letter code: Small ribosomal subunit protein bS18 (75 aa).

Belongs to the bacterial ribosomal protein bS18 family. Part of the 30S ribosomal subunit. Forms a tight heterodimer with protein bS6.

Binds as a heterodimer with protein bS6 to the central domain of the 16S rRNA, where it helps stabilize the platform of the 30S subunit. The sequence is that of Small ribosomal subunit protein bS18 from Yersinia enterocolitica serotype O:8 / biotype 1B (strain NCTC 13174 / 8081).